The following is a 285-amino-acid chain: Pantothenate synthetase (285 aa).

33–40 (MGALHEGH) provides a ligand contact to ATP. Residue His-40 is the Proton donor of the active site. Gln-64 is a (R)-pantoate binding site. Residue Gln-64 participates in beta-alanine binding. 150-153 (GEKD) is an ATP binding site. A (R)-pantoate-binding site is contributed by Gln-156. Residues Ala-179 and 187 to 190 (LSSR) each bind ATP.

The protein belongs to the pantothenate synthetase family. In terms of assembly, homodimer.

It localises to the cytoplasm. The catalysed reaction is (R)-pantoate + beta-alanine + ATP = (R)-pantothenate + AMP + diphosphate + H(+). It functions in the pathway cofactor biosynthesis; (R)-pantothenate biosynthesis; (R)-pantothenate from (R)-pantoate and beta-alanine: step 1/1. In terms of biological role, catalyzes the condensation of pantoate with beta-alanine in an ATP-dependent reaction via a pantoyl-adenylate intermediate. The chain is Pantothenate synthetase from Caulobacter vibrioides (strain ATCC 19089 / CIP 103742 / CB 15) (Caulobacter crescentus).